The chain runs to 321 residues: o-succinylbenzoate synthase (321 aa).

The active-site Proton donor is lysine 110. The Mg(2+) site is built by aspartate 138, glutamate 165, and aspartate 188. Catalysis depends on lysine 212, which acts as the Proton acceptor.

This sequence belongs to the mandelate racemase/muconate lactonizing enzyme family. MenC type 1 subfamily. The cofactor is a divalent metal cation.

It carries out the reaction (1R,6R)-6-hydroxy-2-succinyl-cyclohexa-2,4-diene-1-carboxylate = 2-succinylbenzoate + H2O. The protein operates within quinol/quinone metabolism; 1,4-dihydroxy-2-naphthoate biosynthesis; 1,4-dihydroxy-2-naphthoate from chorismate: step 4/7. Its pathway is quinol/quinone metabolism; menaquinone biosynthesis. Converts 2-succinyl-6-hydroxy-2,4-cyclohexadiene-1-carboxylate (SHCHC) to 2-succinylbenzoate (OSB). The protein is o-succinylbenzoate synthase of Mycolicibacterium smegmatis (strain ATCC 700084 / mc(2)155) (Mycobacterium smegmatis).